Reading from the N-terminus, the 337-residue chain is Membrane-spanning 4-domains subfamily A member 18 (337 aa).

Residues 101–121 (LGTTDLQTQPGGPQNPPTCAP) are disordered. The next 4 helical transmembrane spans lie at 155-175 (LGAI…NPSL), 183-203 (AISG…SLSV), 220-240 (MNVV…VDLI), and 252-272 (GGLL…SHFG).

It belongs to the MS4A family.

It localises to the membrane. The chain is Membrane-spanning 4-domains subfamily A member 18 (MS4A18) from Bos taurus (Bovine).